The following is a 231-amino-acid chain: 2-C-methyl-D-erythritol 4-phosphate cytidylyltransferase (231 aa).

It belongs to the IspD/TarI cytidylyltransferase family. IspD subfamily.

It carries out the reaction 2-C-methyl-D-erythritol 4-phosphate + CTP + H(+) = 4-CDP-2-C-methyl-D-erythritol + diphosphate. The protein operates within isoprenoid biosynthesis; isopentenyl diphosphate biosynthesis via DXP pathway; isopentenyl diphosphate from 1-deoxy-D-xylulose 5-phosphate: step 2/6. In terms of biological role, catalyzes the formation of 4-diphosphocytidyl-2-C-methyl-D-erythritol from CTP and 2-C-methyl-D-erythritol 4-phosphate (MEP). The sequence is that of 2-C-methyl-D-erythritol 4-phosphate cytidylyltransferase from Fusobacterium nucleatum subsp. nucleatum (strain ATCC 25586 / DSM 15643 / BCRC 10681 / CIP 101130 / JCM 8532 / KCTC 2640 / LMG 13131 / VPI 4355).